We begin with the raw amino-acid sequence, 303 residues long: tRNA pseudouridine synthase A (303 aa).

The active-site Nucleophile is the Asp-59. Tyr-128 is a binding site for substrate.

This sequence belongs to the tRNA pseudouridine synthase TruA family. Homodimer.

The enzyme catalyses uridine(38/39/40) in tRNA = pseudouridine(38/39/40) in tRNA. Formation of pseudouridine at positions 38, 39 and 40 in the anticodon stem and loop of transfer RNAs. The chain is tRNA pseudouridine synthase A from Bifidobacterium longum (strain DJO10A).